Here is a 327-residue protein sequence, read N- to C-terminus: Gibberellin 2-beta-dioxygenase 1 (327 aa).

The Fe2OG dioxygenase domain occupies 171–276 (QSDCLFRVNH…RLSMIYFCGP (106 aa)). His-200, Asp-202, and His-257 together coordinate Fe cation. Arg-267 is an active-site residue.

Belongs to the iron/ascorbate-dependent oxidoreductase family. GA2OX subfamily. Fe cation serves as cofactor. In terms of tissue distribution, predominantly expressed in roots, flowers, young fruits and seeds.

The catalysed reaction is gibberellin A1 + 2-oxoglutarate + O2 = gibberellin A8 + succinate + CO2. It participates in plant hormone biosynthesis; gibberellin biosynthesis. Its function is as follows. Catalyzes the 2-beta-hydroxylation of several biologically active gibberellins, leading to the homeostatic regulation of their endogenous level. Catabolism of gibberellins (GAs) plays a central role in plant development. Converts GA9/GA20 to GA51/GA29 and GA4/GA1 to GA34/GA8. This Pisum sativum (Garden pea) protein is Gibberellin 2-beta-dioxygenase 1 (GA2OX1).